We begin with the raw amino-acid sequence, 266 residues long: uncharacterized protein (266 aa).

A helical transmembrane segment spans residues 13-33 (IIGLMLIIFAGILFYAYILQH).

This sequence belongs to the LicD transferase family.

It is found in the membrane. This is an uncharacterized protein from Rickettsia prowazekii (strain Madrid E).